Here is a 110-residue protein sequence, read N- to C-terminus: Parvalbumin alpha (110 aa).

2 consecutive EF-hand domains span residues 39–74 (KNAK…FAPE) and 78–110 (LSEK…VANS). Ca(2+)-binding residues include Asp52, Asp54, Ser56, Phe58, Glu60, Glu63, Asp91, Asp93, Asp95, Lys97, and Glu102.

The protein belongs to the parvalbumin family.

Functionally, in muscle, parvalbumin is thought to be involved in relaxation after contraction. It binds two calcium ions. The polypeptide is Parvalbumin alpha (Callorhinchus milii (Ghost shark)).